A 249-amino-acid polypeptide reads, in one-letter code: Acetate transporter protein patA (249 aa).

6 consecutive transmembrane segments (helical) span residues 42 to 62 (IGSP…TLSM), 71 to 91 (AITN…LVLV), 106 to 126 (VFGG…PAFG), 141 to 161 (AIGY…VAAM), 169 to 189 (GMLG…FSFA), and 202 to 222 (AAGA…GHLM).

The protein belongs to the acetate uptake transporter (AceTr) (TC 2.A.96) family.

The protein resides in the endoplasmic reticulum membrane. It participates in mycotoxin biosynthesis; patulin biosynthesis. Its function is as follows. Acetate transporter protein; part of the gene cluster that mediates the biosynthesis of patulin, an acetate-derived tetraketide mycotoxin produced by several fungal species that shows antimicrobial properties against several bacteria. May be involved in the uptake of acetate, a substrate for the synthesis of 6-methylsalicylic acid by the polyketide synthase patK. The sequence is that of Acetate transporter protein patA from Penicillium expansum (Blue mold rot fungus).